Consider the following 5058-residue polypeptide: ATP-binding cassette sub-family A member 13 (5058 aa).

A run of 7 helical transmembrane segments spans residues 23–43 (PVLFLAEFFWPCILFVILTVL), 3568–3588 (VGFFFPLIMMLTWMVSVASMV), 3607–3627 (GVHPVIHFLAWFLENMAVLTI), 3648–3668 (FIVFLFLLDFGMSVVMLSYLL), 3679–3699 (ALCTSLVYMISFLPYIVLLVL), 3709–3729 (TFLCLLSTTAFGQGVFFITFL), and 3752–3772 (FGWVCWMILFDSSLYFLCGWY). The region spanning 3842-4074 (VTLVSVTKEY…YGQGLRLTLT (233 aa)) is the ABC transporter 1 domain. 3875 to 3882 (GTNGAGKT) is a binding site for ATP. 7 helical membrane passes run 4226–4246 (TLADLLLPVLFVALAMGLFMV), 4458–4478 (VALCIVLGFSILSASIGSSVV), 4504–4524 (FLYDMLFYLVSVCLCVAVIVA), 4536–4556 (LAATALLLSLFGYATLPWMYL), 4568–4588 (FISYVSLNFIFGLCTMLITIM), 4607–4627 (VLKWVFTIFPQFCLGQGLVEL), and 4651–4671 (MNFLGWIFVQLASQGTVLLLL). In terms of domain architecture, ABC transporter 2 spans 4718–4956 (LVLYNLSKHY…FGDGYTVKVW (239 aa)). Position 4754 to 4761 (4754 to 4761 (GVNGAGKS)) interacts with ATP.

Belongs to the ABC transporter superfamily. As to expression, significantly expressed in the bone marrow, trachea, testis, thyroid and lung as well as in skin fibroblasts.

The protein localises to the cytoplasmic vesicle membrane. It catalyses the reaction cholesterol(in) + ATP + H2O = cholesterol(out) + ADP + phosphate + H(+). In terms of biological role, may mediate the cholesterol and gangliosides transport from the plasma membrane to intracellular vesicles in an ATP hydrolysis dependent manner, thus playing a role in their internalization by endocytic retrograde transport and may also participate in the endocytosis of synaptic vesicle in cortical neurons. The chain is ATP-binding cassette sub-family A member 13 from Homo sapiens (Human).